Consider the following 880-residue polypeptide: MSEEKNLPTKYQPTEIEAGRYQKWLDQDLFKPSGDKKAKPYSIVIPPPNVTGKLHLGHAWDTTLQDMIIRQKRMQGFDTLWLPGMDHAGIATQAKVEEKLAQQGISRYDLGREKFVDQVWEWKEEYASHIREQWAKMGLSLDYSRERFTLDEGLSEAVRKVFVSLYEKDLIYRGEYIINWDPKAKTALSDIEVIHKDIEGAFYHMSYPLSDGSGVVEIATTRPETMLGDTAIAVHPEDERYQELIGKTVVLPLVDKEIPIIADDYVDMEFGTGVVKITPAHDPNDFEVGNRHDLPRVNVMNEDGTMNELAGKYEGMDRFAARKAIVSDLKELGRLIKIETMNHSVGHSERTGVVVEPRLSTQWFVKMGPLAEKAMKNQETEDAVEFYPPRFNQTFLRWMENVHDWVISRQLWWGHQIPAWYHKETGEMYVGMEEPADSENWVQDSDVLDTWFSSALWPFSTMGWPNEASEDYQRYFPTSTLVTGYDIIFFWVSRMIFQSLEFTGERPFQNVLIHGLIRDEQGRKMSKSLGNGIDPMDVIEKYGADALRWFLSNGSAPGQDVRFSYEKMDASWNFINKIWNASRFVIMNVEGMTAADIDFSGEKTVADRWILTRLNETVARVTELFDRFEFGEAGRQLYNFIWDDFCDWYIEMSKEILYGDNEAAKQTTRSILVYTLDQILRLLHPIMPFVTEEIWEKIPHQGESLVVAEYPVVHEEFNDEAAARGMEVLKEVIRSVRNIRAEVNTPLSKPITLLIKTNDTEVEEFLTANTSYLERFCNPEELVISREIEAPELAMSAVLTGAELFLPLAGLINIEEEIARLEKELDKWTKEVKRVQGKLSNERFVSNAPDEVVEAERAKEKDYLEKQEAVKERIAQLRSI.

The 'HIGH' region signature appears at 48-58 (PNVTGKLHLGH). Positions 524–528 (KMSKS) match the 'KMSKS' region motif. Lysine 527 provides a ligand contact to ATP. Residues 808–879 (LAGLINIEEE…VKERIAQLRS (72 aa)) adopt a coiled-coil conformation.

The protein belongs to the class-I aminoacyl-tRNA synthetase family. ValS type 1 subfamily. In terms of assembly, monomer.

The protein localises to the cytoplasm. The catalysed reaction is tRNA(Val) + L-valine + ATP = L-valyl-tRNA(Val) + AMP + diphosphate. Catalyzes the attachment of valine to tRNA(Val). As ValRS can inadvertently accommodate and process structurally similar amino acids such as threonine, to avoid such errors, it has a 'posttransfer' editing activity that hydrolyzes mischarged Thr-tRNA(Val) in a tRNA-dependent manner. The chain is Valine--tRNA ligase from Enterococcus faecalis (strain ATCC 700802 / V583).